The chain runs to 310 residues: Malate dehydrogenase (310 aa).

Residues 7 to 12 (GAGNVG) and aspartate 32 each bind NAD(+). 2 residues coordinate substrate: arginine 81 and arginine 87. NAD(+) is bound by residues asparagine 94 and 117–119 (VSN). Substrate-binding residues include asparagine 119 and arginine 150. The Proton acceptor role is filled by histidine 174.

The protein belongs to the LDH/MDH superfamily. MDH type 3 family.

It catalyses the reaction (S)-malate + NAD(+) = oxaloacetate + NADH + H(+). In terms of biological role, catalyzes the reversible oxidation of malate to oxaloacetate. This chain is Malate dehydrogenase, found in Chloroherpeton thalassium (strain ATCC 35110 / GB-78).